Here is a 623-residue protein sequence, read N- to C-terminus: Transcriptional activator of proteases prtT (623 aa).

The zn(2)-C6 fungal-type DNA-binding region spans 50–79 (CHTCRKLKTRCDLDPRGHACRRCLSLRIDC).

The protein belongs to the prtT family.

It is found in the nucleus. Its function is as follows. Transcription factor required for protein utilization and degradation. Regulates transcription of major secreted proteases. The chain is Transcriptional activator of proteases prtT (prtT) from Aspergillus niger (strain ATCC MYA-4892 / CBS 513.88 / FGSC A1513).